The following is a 136-amino-acid chain: T-cell receptor alpha chain constant (136 aa).

One can recognise an Ig-like C1-type domain in the interval 19–103 (STLCLFTDFD…LTEKSFETDM (85 aa)). C22 and C72 are disulfide-bonded. Residues N66, N80, and N109 are each glycosylated (N-linked (GlcNAc...) asparagine). Residues 90–111 (CDATLTEKSFETDMNLNFQNLS) are connecting peptide. A helical membrane pass occupies residues 111 to 131 (SVMGLRILLLKVAGFNLLMTL). Topologically, residues 132–136 (RLWSS) are cytoplasmic.

In terms of assembly, alpha-beta TR is a heterodimer composed of an alpha and beta chain; disulfide-linked. The alpha-beta TR is associated with the transmembrane signaling CD3 coreceptor proteins to form the TR-CD3 (TcR or TCR). The assembly of alpha-beta TR heterodimers with CD3 occurs in the endoplasmic reticulum where a single alpha-beta TR heterodimer associates with one CD3D-CD3E heterodimer, one CD3G-CD3E heterodimer and one CD247 homodimer forming a stable octameric structure. CD3D-CD3E and CD3G-CD3E heterodimers preferentially associate with TR alpha and TR beta chains, respectively. The association of the CD247 homodimer is the last step of TcR assembly in the endoplasmic reticulum and is required for transport to the cell surface.

The protein localises to the cell membrane. In terms of biological role, constant region of T cell receptor (TR) alpha chain. Alpha-beta T cell receptors are antigen specific receptors which are essential to the immune response and are present on the cell surface of T lymphocytes. Recognize peptide-major histocompatibility (MH) (pMH) complexes that are displayed by antigen presenting cells (APC), a prerequisite for efficient T cell adaptive immunity against pathogens. Binding of alpha-beta TR to pMH complex initiates TR-CD3 clustering on the cell surface and intracellular activation of LCK that phosphorylates the ITAM motifs of CD3G, CD3D, CD3E and CD247 enabling the recruitment of ZAP70. In turn, ZAP70 phosphorylates LAT, which recruits numerous signaling molecules to form the LAT signalosome. The LAT signalosome propagates signal branching to three major signaling pathways, the calcium, the mitogen-activated protein kinase (MAPK) kinase and the nuclear factor NF-kappa-B (NF-kB) pathways, leading to the mobilization of transcription factors that are critical for gene expression and essential for T cell growth and differentiation. The T cell repertoire is generated in the thymus, by V-(D)-J rearrangement. This repertoire is then shaped by intrathymic selection events to generate a peripheral T cell pool of self-MH restricted, non-autoaggressive T cells. Post-thymic interaction of alpha-beta TR with the pMH complexes shapes TR structural and functional avidity. This is T-cell receptor alpha chain constant from Mus musculus (Mouse).